Here is a 102-residue protein sequence, read N- to C-terminus: Small ribosomal subunit protein uS10 (102 aa).

It belongs to the universal ribosomal protein uS10 family. As to quaternary structure, part of the 30S ribosomal subunit.

Functionally, involved in the binding of tRNA to the ribosomes. The sequence is that of Small ribosomal subunit protein uS10 from Pediococcus pentosaceus (strain ATCC 25745 / CCUG 21536 / LMG 10740 / 183-1w).